The chain runs to 903 residues: MVSLGGFARKLFGSANDRRVRGYKGRVDAINALEAEMKALSDEALAAKTAEFRREIADGKSLDDILVPAFAVVREAARRVLGLRPFDVQLIGGMILHERAIAEMKTGEGKTLVATLPVYLNALAGKGVHVVTVNDYLAQRDAGMMGRIYGFLGMSTGVIVHGLSDEQRRDAYACDVTYATNNELGFDYLRDNMKYERSQMVQRGHFFAIVDEVDSILVDEARTPLIISGPLDDRSDLYNTINEFIPRLSPEDYEIDEKQRSANFSEDGTEKLENMLREAGLLKGESLYDIENVAIVHHVNNALKAHKLFTRDKDYIVRNGEIVIIDEFTGRMMPGRRYSEGQHQALEAKEKVQIQPENQTLASITFQNYFRMYDKLAGMTGTAATEAEEFGNIYGLEVLEVPTNLPIKRIDEDDEVYRTVGEKFKAIIEEIKSAHERGQPMLVGTTSIEKSELLAEMLKKDGFSKFQVLNARYHEQEAFIVAQAGVPGAITIATNMAGRGTDIQLGGNPDMRIQQELSDVEPGAERESREKAIREEVQVLKEKALAAGGLYVLATERHESRRIDNQLRGRSGRQGDPGRSKFYLSLQDDLMRIFGSDRMDGMLQKLGLKEGEAIVHPWINKALERAQKKVEARNFDIRKNLLKYDDVLNDQRKVIFEQRIELMDAESVTDTVTDMRNEVIEEVVAKRIPERAYAEKWDAEGLKADVQQYLNLDLPIVEWVAEEGIAEDDIRERITAAADQAAADRAERFGPEVMQYVERSVILQTLDHLWREHIVNLDHLRSVIGFRGYAQRDPLQEYKSEAFELFQALLGNLRQAVTAQLMRVELVREAPEEPQPLPPMQAHHIDPLTGEDDFAPAGDTLLAVAPTTRDPADPSTWGKVSRNEACPCGSGKKYKHCHGVYEA.

ATP-binding positions include Gln89, 107–111, and Asp502; that span reads GEGKT. Residues Cys886, Cys888, Cys897, and His898 each coordinate Zn(2+).

It belongs to the SecA family. In terms of assembly, monomer and homodimer. Part of the essential Sec protein translocation apparatus which comprises SecA, SecYEG and auxiliary proteins SecDF-YajC and YidC. The cofactor is Zn(2+).

Its subcellular location is the cell inner membrane. It localises to the cytoplasm. The catalysed reaction is ATP + H2O + cellular proteinSide 1 = ADP + phosphate + cellular proteinSide 2.. Its function is as follows. Part of the Sec protein translocase complex. Interacts with the SecYEG preprotein conducting channel. Has a central role in coupling the hydrolysis of ATP to the transfer of proteins into and across the cell membrane, serving both as a receptor for the preprotein-SecB complex and as an ATP-driven molecular motor driving the stepwise translocation of polypeptide chains across the membrane. The chain is Protein translocase subunit SecA from Sinorhizobium medicae (strain WSM419) (Ensifer medicae).